The following is a 240-amino-acid chain: Purine nucleoside phosphorylase DeoD-type (240 aa).

His-5 is a binding site for a purine D-ribonucleoside. Phosphate-binding positions include Gly-21, Arg-25, Arg-44, and 88 to 91 (RVGS). A purine D-ribonucleoside contacts are provided by residues 180-182 (EME) and 204-205 (SD). Asp-205 serves as the catalytic Proton donor.

The protein belongs to the PNP/UDP phosphorylase family. As to quaternary structure, homohexamer; trimer of homodimers.

The enzyme catalyses a purine D-ribonucleoside + phosphate = a purine nucleobase + alpha-D-ribose 1-phosphate. It catalyses the reaction a purine 2'-deoxy-D-ribonucleoside + phosphate = a purine nucleobase + 2-deoxy-alpha-D-ribose 1-phosphate. In terms of biological role, catalyzes the reversible phosphorolytic breakdown of the N-glycosidic bond in the beta-(deoxy)ribonucleoside molecules, with the formation of the corresponding free purine bases and pentose-1-phosphate. The sequence is that of Purine nucleoside phosphorylase DeoD-type from Actinobacillus pleuropneumoniae serotype 5b (strain L20).